Reading from the N-terminus, the 424-residue chain is Histidine--tRNA ligase (424 aa).

It belongs to the class-II aminoacyl-tRNA synthetase family. Homodimer.

It localises to the cytoplasm. It catalyses the reaction tRNA(His) + L-histidine + ATP = L-histidyl-tRNA(His) + AMP + diphosphate + H(+). In Francisella philomiragia subsp. philomiragia (strain ATCC 25017 / CCUG 19701 / FSC 153 / O#319-036), this protein is Histidine--tRNA ligase.